Here is a 280-residue protein sequence, read N- to C-terminus: Succinate dehydrogenase [ubiquinone] iron-sulfur subunit 2, mitochondrial (280 aa).

A mitochondrion-targeting transit peptide spans 1-28 (MAFGLIGRVVGTKSSRLSTAARLIPARW). In terms of domain architecture, 2Fe-2S ferredoxin-type spans 51–140 (FQIYRWNPDN…ETTITPLPHM (90 aa)). [2Fe-2S] cluster is bound by residues Cys-101, Cys-106, and Cys-121. Positions 183–213 (DRAKLDGMYECILCACCSTSCPSYWWNPESY) constitute a 4Fe-4S ferredoxin-type domain. [4Fe-4S] cluster is bound by residues Cys-193, Cys-196, and Cys-199. Cys-203 serves as a coordination point for [3Fe-4S] cluster. Residue Trp-208 participates in a ubiquinone binding. Residues Cys-250 and Cys-256 each coordinate [3Fe-4S] cluster. Cys-260 is a binding site for [4Fe-4S] cluster.

This sequence belongs to the succinate dehydrogenase/fumarate reductase iron-sulfur protein family. In terms of assembly, component of complex II composed of eight subunits in plants: four classical SDH subunits SDH1, SDH2, SDH3 and SDH4 (a flavoprotein (FP), an iron-sulfur protein (IP), and a cytochrome b composed of a large and a small subunit.), as well as four subunits unknown in mitochondria from bacteria and heterotrophic eukaryotes. It depends on [2Fe-2S] cluster as a cofactor. Requires [3Fe-4S] cluster as cofactor. [4Fe-4S] cluster is required as a cofactor. In terms of tissue distribution, ubiquitous. Preferentially expressed in flowers, inflorescences and root tips.

Its subcellular location is the mitochondrion inner membrane. The enzyme catalyses a quinone + succinate = fumarate + a quinol. The protein operates within carbohydrate metabolism; tricarboxylic acid cycle; fumarate from succinate (eukaryal route): step 1/1. Iron-sulfur protein (IP) subunit of succinate dehydrogenase (SDH) that is involved in complex II of the mitochondrial electron transport chain and is responsible for transferring electrons from succinate to ubiquinone (coenzyme Q). The protein is Succinate dehydrogenase [ubiquinone] iron-sulfur subunit 2, mitochondrial (SDH2-2) of Arabidopsis thaliana (Mouse-ear cress).